A 146-amino-acid polypeptide reads, in one-letter code: Small ribosomal subunit protein uS9 (146 aa).

Position 3 is a phosphoserine (Ser-3). Position 60 is an N6-acetyllysine (Lys-60).

Belongs to the universal ribosomal protein uS9 family. In terms of assembly, component of the small ribosomal subunit. Part of the small subunit (SSU) processome, composed of more than 70 proteins and the RNA chaperone small nucleolar RNA (snoRNA) U3.

It is found in the cytoplasm. The protein resides in the nucleus. Its subcellular location is the nucleolus. Its function is as follows. Component of the small ribosomal subunit. The ribosome is a large ribonucleoprotein complex responsible for the synthesis of proteins in the cell. Part of the small subunit (SSU) processome, first precursor of the small eukaryotic ribosomal subunit. During the assembly of the SSU processome in the nucleolus, many ribosome biogenesis factors, an RNA chaperone and ribosomal proteins associate with the nascent pre-rRNA and work in concert to generate RNA folding, modifications, rearrangements and cleavage as well as targeted degradation of pre-ribosomal RNA by the RNA exosome. This Bos taurus (Bovine) protein is Small ribosomal subunit protein uS9 (RPS16).